Consider the following 214-residue polypeptide: Outer-membrane lipoprotein LolB (214 aa).

Positions 1–25 (MNNLKRFTKSIFSCIALSGLLFLGG) are cleaved as a signal peptide. C26 is lipidated: N-palmitoyl cysteine. Residue C26 is the site of S-diacylglycerol cysteine attachment.

This sequence belongs to the LolB family. In terms of assembly, monomer.

It localises to the cell outer membrane. Functionally, plays a critical role in the incorporation of lipoproteins in the outer membrane after they are released by the LolA protein. The polypeptide is Outer-membrane lipoprotein LolB (Shewanella oneidensis (strain ATCC 700550 / JCM 31522 / CIP 106686 / LMG 19005 / NCIMB 14063 / MR-1)).